The primary structure comprises 499 residues: Glycerol kinase (499 aa).

Residue T17 participates in ADP binding. Positions 17, 18, and 19 each coordinate ATP. Position 17 (T17) interacts with sn-glycerol 3-phosphate. R21 provides a ligand contact to ADP. The sn-glycerol 3-phosphate site is built by R87, E88, Y139, and D243. Glycerol is bound by residues R87, E88, Y139, D243, and Q244. ADP contacts are provided by T265 and G308. The ATP site is built by T265, G308, Q312, and G409. Residues G409 and N413 each coordinate ADP.

It belongs to the FGGY kinase family.

The enzyme catalyses glycerol + ATP = sn-glycerol 3-phosphate + ADP + H(+). Its pathway is polyol metabolism; glycerol degradation via glycerol kinase pathway; sn-glycerol 3-phosphate from glycerol: step 1/1. Its activity is regulated as follows. Inhibited by fructose 1,6-bisphosphate (FBP). Functionally, key enzyme in the regulation of glycerol uptake and metabolism. Catalyzes the phosphorylation of glycerol to yield sn-glycerol 3-phosphate. This chain is Glycerol kinase, found in Pseudomonas putida (strain ATCC 700007 / DSM 6899 / JCM 31910 / BCRC 17059 / LMG 24140 / F1).